Reading from the N-terminus, the 878-residue chain is Phosphoenolpyruvate carboxylase (878 aa).

Residues H137 and K545 contribute to the active site.

It belongs to the PEPCase type 1 family. The cofactor is Mg(2+).

It catalyses the reaction oxaloacetate + phosphate = phosphoenolpyruvate + hydrogencarbonate. Its function is as follows. Forms oxaloacetate, a four-carbon dicarboxylic acid source for the tricarboxylic acid cycle. This chain is Phosphoenolpyruvate carboxylase, found in Proteus mirabilis (strain HI4320).